We begin with the raw amino-acid sequence, 133 residues long: ATP synthase epsilon chain, chloroplastic (133 aa).

This sequence belongs to the ATPase epsilon chain family. In terms of assembly, F-type ATPases have 2 components, CF(1) - the catalytic core - and CF(0) - the membrane proton channel. CF(1) has five subunits: alpha(3), beta(3), gamma(1), delta(1), epsilon(1). CF(0) has three main subunits: a, b and c.

Its subcellular location is the plastid. It localises to the chloroplast thylakoid membrane. Produces ATP from ADP in the presence of a proton gradient across the membrane. This Mesostigma viride (Green alga) protein is ATP synthase epsilon chain, chloroplastic.